We begin with the raw amino-acid sequence, 234 residues long: Preflagellin peptidase (234 aa).

Residue Met-1 is a topological domain, cytoplasmic. Residues Ile-2–Asp-18 form a helical membrane-spanning segment. Over Leu-19–Glu-23 the chain is Extracellular. A helical membrane pass occupies residues Ile-24–Ile-46. Over Ser-47–Asp-49 the chain is Cytoplasmic. The helical transmembrane segment at Met-50–Leu-72 threads the bilayer. Topologically, residues Leu-73 to Gly-78 are extracellular. Residues Asp-79–Leu-89 form a helical membrane-spanning segment. Over Ile-90 to Leu-110 the chain is Cytoplasmic. A helical membrane pass occupies residues Pro-111–Arg-139. At Gly-140–Pro-205 the chain is on the extracellular side. Residues Phe-206–Thr-217 form a helical membrane-spanning segment. Over Ser-218–Leu-234 the chain is Cytoplasmic.

This sequence belongs to the peptidase A24 family. Archaeal preflagellin peptidase subfamily.

Its subcellular location is the cell membrane. It catalyses the reaction Cleaves the signal peptide of 3 to 12 amino acids from the N-terminal of preflagellin, usually at Arg-Gly-|- or Lys-Gly-|-, to release flagellin.. In terms of biological role, cleaves the N-terminal leader peptide from preflagellins. In Methanocaldococcus jannaschii (strain ATCC 43067 / DSM 2661 / JAL-1 / JCM 10045 / NBRC 100440) (Methanococcus jannaschii), this protein is Preflagellin peptidase (flaK).